A 306-amino-acid chain; its full sequence is Lipoyl synthase (306 aa).

[4Fe-4S] cluster is bound by residues Cys-52, Cys-57, Cys-63, Cys-78, Cys-82, Cys-85, and Ser-289. The region spanning Trp-64–Lys-278 is the Radical SAM core domain.

Belongs to the radical SAM superfamily. Lipoyl synthase family. It depends on [4Fe-4S] cluster as a cofactor.

The protein resides in the cytoplasm. The catalysed reaction is [[Fe-S] cluster scaffold protein carrying a second [4Fe-4S](2+) cluster] + N(6)-octanoyl-L-lysyl-[protein] + 2 oxidized [2Fe-2S]-[ferredoxin] + 2 S-adenosyl-L-methionine + 4 H(+) = [[Fe-S] cluster scaffold protein] + N(6)-[(R)-dihydrolipoyl]-L-lysyl-[protein] + 4 Fe(3+) + 2 hydrogen sulfide + 2 5'-deoxyadenosine + 2 L-methionine + 2 reduced [2Fe-2S]-[ferredoxin]. Its pathway is protein modification; protein lipoylation via endogenous pathway; protein N(6)-(lipoyl)lysine from octanoyl-[acyl-carrier-protein]: step 2/2. Catalyzes the radical-mediated insertion of two sulfur atoms into the C-6 and C-8 positions of the octanoyl moiety bound to the lipoyl domains of lipoate-dependent enzymes, thereby converting the octanoylated domains into lipoylated derivatives. This Leptospira biflexa serovar Patoc (strain Patoc 1 / Ames) protein is Lipoyl synthase.